Reading from the N-terminus, the 1018-residue chain is DNA polymerase gamma (1018 aa).

This sequence belongs to the DNA polymerase type-A family. Requires Mg(2+) as cofactor.

It is found in the mitochondrion. The catalysed reaction is DNA(n) + a 2'-deoxyribonucleoside 5'-triphosphate = DNA(n+1) + diphosphate. Functionally, involved in the replication of mitochondrial DNA. The sequence is that of DNA polymerase gamma (mip1) from Schizosaccharomyces pombe (strain 972 / ATCC 24843) (Fission yeast).